A 298-amino-acid polypeptide reads, in one-letter code: S-adenosyl-L-methionine-dependent methyltransferase dpfgK (298 aa).

Belongs to the methyltransferase superfamily.

It participates in secondary metabolite biosynthesis; terpenoid biosynthesis. Functionally, S-adenosyl-L-methionine-dependent methyltransferase; part of the gene cluster that mediates the biosynthesis of diterpenoid pyrones. The first step of the pathway is the synthesis of the alpha-pyrone moiety by the polyketide synthase dpfgA via condensation of one acetyl-CoA starter unit with 3 malonyl-CoA units and 2 methylations. The alpha-pyrone is then combined with geranylgeranyl pyrophosphate (GGPP) formed by the GGPP synthase dpfgD through the action of the prenyltransferase dpfgC to yield a linear alpha-pyrone diterpenoid. Subsequent steps in the diterpenoid pyrone biosynthetic pathway involve the decalin core formation, which is initiated by the epoxidation of the C10-C11 olefin by the FAD-dependent oxidoreductase dpfgE, and is followed by a cyclization cascade catalyzed by the terpene cyclase dpfgB. The short chain dehydrogenase/reductase dpfgG then oxidizes the 8S hydroxy group to a ketone and the short chain dehydrogenase/reductase dpfgH reduces the ketone to the 8R hydroxy group to yield higginsianin B. Higginsianin B is further methylated by the methyltransferase dpfgI to produce the intermediate named FDDP B. The cytochrome P450 monooxygenase dfgpJ then catalyzes a three-step oxidation at C-27 to generate a carboxylic acid as well as C-26 hydroxylation. Finally, methyltransferase dpfgK methylates the carboxylic acid generated by dpfgJ, yielding the final diterpenoid pyrones from the pathway which were named FDDP D and FDDP E. This is S-adenosyl-L-methionine-dependent methyltransferase dpfgK from Gibberella zeae (strain ATCC MYA-4620 / CBS 123657 / FGSC 9075 / NRRL 31084 / PH-1) (Wheat head blight fungus).